The primary structure comprises 370 residues: Putative alanine racemase 2 (370 aa).

Lysine 38 functions as the Proton acceptor; specific for D-alanine in the catalytic mechanism. Lysine 38 carries the post-translational modification N6-(pyridoxal phosphate)lysine. Tyrosine 266 serves as the catalytic Proton acceptor; specific for L-alanine.

This sequence belongs to the alanine racemase family. It depends on pyridoxal 5'-phosphate as a cofactor.

It catalyses the reaction L-alanine = D-alanine. The chain is Putative alanine racemase 2 (alr2) from Schizosaccharomyces pombe (strain 972 / ATCC 24843) (Fission yeast).